A 68-amino-acid chain; its full sequence is Large ribosomal subunit protein uL29 (68 aa).

The protein belongs to the universal ribosomal protein uL29 family.

This is Large ribosomal subunit protein uL29 from Streptococcus sanguinis (strain SK36).